The chain runs to 460 residues: ATP synthase subunit beta (460 aa).

150–157 (GGAGVGKT) serves as a coordination point for ATP.

This sequence belongs to the ATPase alpha/beta chains family. F-type ATPases have 2 components, CF(1) - the catalytic core - and CF(0) - the membrane proton channel. CF(1) has five subunits: alpha(3), beta(3), gamma(1), delta(1), epsilon(1). CF(0) has three main subunits: a(1), b(2) and c(9-12). The alpha and beta chains form an alternating ring which encloses part of the gamma chain. CF(1) is attached to CF(0) by a central stalk formed by the gamma and epsilon chains, while a peripheral stalk is formed by the delta and b chains.

It is found in the cell inner membrane. It catalyses the reaction ATP + H2O + 4 H(+)(in) = ADP + phosphate + 5 H(+)(out). In terms of biological role, produces ATP from ADP in the presence of a proton gradient across the membrane. The catalytic sites are hosted primarily by the beta subunits. This is ATP synthase subunit beta from Shigella dysenteriae serotype 1 (strain Sd197).